The following is a 97-amino-acid chain: Large ribosomal subunit protein eL21 (97 aa).

The protein belongs to the eukaryotic ribosomal protein eL21 family.

In Methanosarcina barkeri (strain Fusaro / DSM 804), this protein is Large ribosomal subunit protein eL21.